A 90-amino-acid chain; its full sequence is DNA-directed RNA polymerase subunit omega (90 aa).

This sequence belongs to the RNA polymerase subunit omega family. The RNAP catalytic core consists of 2 alpha, 1 beta, 1 beta' and 1 omega subunit. When a sigma factor is associated with the core the holoenzyme is formed, which can initiate transcription.

It catalyses the reaction RNA(n) + a ribonucleoside 5'-triphosphate = RNA(n+1) + diphosphate. Functionally, promotes RNA polymerase assembly. Latches the N- and C-terminal regions of the beta' subunit thereby facilitating its interaction with the beta and alpha subunits. Required for kasugamycin production and aerial mycelium formation in S.kasugaensis and responsible for pleiotropy. This chain is DNA-directed RNA polymerase subunit omega (rpoZ), found in Streptomyces kasugaensis.